Consider the following 338-residue polypeptide: MEIPGKCTSEEIRLTLTSSFMMGNHCFILLIIISSVFLTVFAIRKLWKNNIFPNCTRTLLFSAIINGVVHHWSIAGIRIRTVYRALVYGSDRCSILFQSSECLIESNLYYYTNLFSSLCCISLFFDRLLSLNAKTSYNTKHFSKIFLLFQSISPFGILYWIFYDSVYTGFVPMCSYPPATSSLKFHKVNEFRLYILGTFFVLSFVIFFYNRTQEKGIIHNVYDTESRYKSYENLLATRAVCIIIATQITCLVTTASTTEILSAYKSSIPNTILLPSIAFMTGLTYSNFFLPIIIIYQTNRIINQRYNAIKRIQNEKSFATHFASLDLSWKSSKIDNSS.

Helical transmembrane passes span 23-43 (GNHC…VFAI), 59-79 (LLFS…GIRI), 108-125 (LYYY…SLFF), 142-162 (FSKI…YWIF), 188-208 (VNEF…VIFF), 240-260 (VCII…TTEI), and 276-296 (SIAF…IIIY).

It belongs to the nematode receptor-like protein sra family.

It localises to the membrane. This Caenorhabditis elegans protein is Serpentine receptor class alpha-31 (sra-31).